We begin with the raw amino-acid sequence, 141 residues long: Hemoglobin subunit alpha (141 aa).

One can recognise a Globin domain in the interval 1–141 (VLSPDDKKHV…VSTVLTSKYR (141 aa)). The residue at position 3 (serine 3) is a Phosphoserine. Residues lysine 7 and lysine 11 each carry the N6-succinyllysine modification. An N6-acetyllysine; alternate modification is found at lysine 16. Lysine 16 bears the N6-succinyllysine; alternate mark. Tyrosine 24 is modified (phosphotyrosine). Phosphoserine is present on serine 35. Lysine 40 bears the N6-succinyllysine mark. The residue at position 49 (serine 49) is a Phosphoserine. Residue histidine 58 participates in O2 binding. Histidine 87 lines the heme b pocket. The residue at position 102 (serine 102) is a Phosphoserine. Threonine 108 carries the post-translational modification Phosphothreonine. Residues serine 124 and serine 131 each carry the phosphoserine modification. Phosphothreonine is present on residues threonine 134 and threonine 137. Serine 138 carries the post-translational modification Phosphoserine.

Belongs to the globin family. As to quaternary structure, heterotetramer of two alpha chains and two beta chains. Red blood cells.

Involved in oxygen transport from the lung to the various peripheral tissues. Functionally, hemopressin acts as an antagonist peptide of the cannabinoid receptor CNR1. Hemopressin-binding efficiently blocks cannabinoid receptor CNR1 and subsequent signaling. The chain is Hemoglobin subunit alpha (HBA) from Cercocebus atys (Sooty mangabey).